Consider the following 702-residue polypeptide: Pheromone-processing carboxypeptidase KEX1 (702 aa).

Positions 1–19 (MKLILSTLIVFIHTLLVSA) are cleaved as a signal peptide. Topologically, residues 20 to 555 (LPTKEGSDPN…SDSTSSKFTR (536 aa)) are lumenal. N85 and N122 each carry an N-linked (GlcNAc...) asparagine glycan. Active-site residues include S184 and D394. N-linked (GlcNAc...) asparagine glycosylation is found at N441 and N449. H452 is a catalytic residue. Residues 491-548 (SRKESDASADGEENAGSDKVPGDSPSQTIDPMISSSTASSSSVESSLSSSTASADSDS) are disordered. The segment covering 524-548 (SSSTASSSSVESSLSSSTASADSDS) has biased composition (low complexity). Residues 556–576 (LIQLAVILVIFWGVYVLYASY) traverse the membrane as a helical segment. Residues 577–702 (KSRPSSIIKK…THNQKQKPMN (126 aa)) are Cytoplasmic-facing. 2 disordered regions span residues 582 to 603 (SIIK…GKKK) and 660 to 702 (IELG…KPMN). Composition is skewed to polar residues over residues 587-598 (PTNNTSNVTRSS) and 692-702 (ATHNQKQKPMN).

It belongs to the peptidase S10 family.

The protein localises to the golgi apparatus. Its subcellular location is the trans-Golgi network membrane. It catalyses the reaction Preferential release of a C-terminal arginine or lysine residue.. In terms of biological role, protease with a carboxypeptidase B-like function involved in the C-terminal processing of the lysine and arginine residues from protein precursors. Promotes cell fusion and is involved in the programmed cell death. The protein is Pheromone-processing carboxypeptidase KEX1 (KEX1) of Candida albicans (strain SC5314 / ATCC MYA-2876) (Yeast).